Reading from the N-terminus, the 355-residue chain is Elongation factor Ts (355 aa).

An involved in Mg(2+) ion dislocation from EF-Tu region spans residues threonine 82 to valine 85.

This sequence belongs to the EF-Ts family.

It is found in the cytoplasm. In terms of biological role, associates with the EF-Tu.GDP complex and induces the exchange of GDP to GTP. It remains bound to the aminoacyl-tRNA.EF-Tu.GTP complex up to the GTP hydrolysis stage on the ribosome. The polypeptide is Elongation factor Ts (tsf) (Helicobacter pylori (strain ATCC 700392 / 26695) (Campylobacter pylori)).